A 448-amino-acid chain; its full sequence is Integrator complex subunit 15 (448 aa).

It belongs to the Integrator subunit 15 family. Component of the Integrator complex, composed of core subunits INTS1, INTS2, INTS3, INTS4, INTS5, INTS6, INTS7, INTS8, INTS9/RC74, INTS10, INTS11/CPSF3L, INTS12, INTS13, INTS14 and INTS15. The core complex associates with protein phosphatase 2A subunits PPP2CA and PPP2R1A, to form the Integrator-PP2A (INTAC) complex. INTS15 is part of the tail subcomplex, composed of INTS10, INTS13, INTS14 and INTS15.

The protein localises to the nucleus. Its subcellular location is the chromosome. Its function is as follows. Component of the integrator complex, a multiprotein complex that terminates RNA polymerase II (Pol II) transcription in the promoter-proximal region of genes. The integrator complex provides a quality checkpoint during transcription elongation by driving premature transcription termination of transcripts that are unfavorably configured for transcriptional elongation: the complex terminates transcription by (1) catalyzing dephosphorylation of the C-terminal domain (CTD) of Pol II subunit POLR2A/RPB1 and SUPT5H/SPT5, (2) degrading the exiting nascent RNA transcript via endonuclease activity and (3) promoting the release of Pol II from bound DNA. The integrator complex is also involved in terminating the synthesis of non-coding Pol II transcripts, such as enhancer RNAs (eRNAs), small nuclear RNAs (snRNAs), telomerase RNAs and long non-coding RNAs (lncRNAs). INTS15 is part of the integrator tail module that acts as a platform for the recruitment of transcription factors at promoters. Within the integrator complex, INTS15 is required to bridge different integrator modules. This chain is Integrator complex subunit 15, found in Mus musculus (Mouse).